The chain runs to 222 residues: Probable pyridoxal 5'-phosphate synthase subunit SNO2 (222 aa).

58 to 60 (GES) serves as a coordination point for L-glutamine. The active-site Nucleophile is C91. Residues R120 and 151 to 152 (IR) contribute to the L-glutamine site. Residues H197 and E199 each act as charge relay system in the active site.

Belongs to the glutaminase PdxT/SNO family.

It carries out the reaction aldehydo-D-ribose 5-phosphate + D-glyceraldehyde 3-phosphate + L-glutamine = pyridoxal 5'-phosphate + L-glutamate + phosphate + 3 H2O + H(+). The catalysed reaction is L-glutamine + H2O = L-glutamate + NH4(+). The protein operates within cofactor biosynthesis; pyridoxal 5'-phosphate biosynthesis. Functionally, catalyzes the hydrolysis of glutamine to glutamate and ammonia as part of the biosynthesis of pyridoxal 5'-phosphate. The resulting ammonia molecule is channeled to the active site of a SNZ isoform. This Saccharomyces cerevisiae (strain ATCC 204508 / S288c) (Baker's yeast) protein is Probable pyridoxal 5'-phosphate synthase subunit SNO2 (SNO2).